Reading from the N-terminus, the 1976-residue chain is Myosin-10 (1976 aa).

R18 is modified (omega-N-methylarginine). Residues 31-81 (TAKKLVWIPSERHGFEAASIKEERGDEVMVELAENGKKAMVNKDDIQKMNP) form the Myosin N-terminal SH3-like domain. Residues 85–783 (SKVEDMAELT…VLAHLEEERD (699 aa)) form the Myosin motor domain. 178–185 (GESGAGKT) contacts ATP. L214 carries the post-translational modification Phosphoserine. Residue K442 is modified to N6-acetyllysine. Residues 661 to 683 (LTKLMATLRNTNPNFVRCIIPNH) form an actin-binding region. The 30-residue stretch at 786-815 (ITDIIIFFQAVCRGYLARKAFAKKQQQLSA) folds into the IQ domain. Positions 845 to 1976 (LQVTRQEEEL…VNETQPPQSE (1132 aa)) form a coiled coil. The tract at residues 1127–1147 (FESEKASRNKAEKQKRDLSEE) is disordered. Basic and acidic residues predominate over residues 1129–1147 (SEKASRNKAEKQKRDLSEE). S1145 carries the post-translational modification Phosphoserine. Residues K1241, K1301, and K1645 each carry the N6-acetyllysine modification. Disordered regions lie at residues 1697 to 1728 (ASSE…SALL) and 1872 to 1976 (MEKA…PQSE). Residues 1698–1708 (SSERARRHAEQ) are compositionally biased toward basic and acidic residues. At R1930 the chain carries Omega-N-methylarginine. S1935, S1937, S1938, and S1939 each carry phosphoserine. R1940 carries the omega-N-methylarginine modification. Phosphoserine occurs at positions 1952 and 1956. A Phosphothreonine modification is found at T1960. Residues 1967–1976 (VNETQPPQSE) show a composition bias toward polar residues. Position 1975 is a phosphoserine (S1975).

It belongs to the TRAFAC class myosin-kinesin ATPase superfamily. Myosin family. As to quaternary structure, myosin is a hexameric protein that consists of 2 heavy chain subunits (MHC), 2 alkali light chain subunits (MLC) and 2 regulatory light chain subunits (MLC-2). Interacts with PLEKHG6. Interacts with ECPAS. Interacts with KIF26B. Interacts with LARP6. Interacts with MCC. Interacts with CFAP95. In terms of assembly, (Microbial infection) Interacts with herpes simplex virus 1/HHV-1 envelope glycoprotein B. In terms of processing, phosphorylated by ABL2. In terms of tissue distribution, isoform 1 is expressed in cerebellum and spinal chord. Isoform 2 is expressed in cerebrum and retina. Isoform 3 is expressed in the cerebrum and to a much lower extent in cerebellum.

The protein localises to the cell projection. Its subcellular location is the lamellipodium. It is found in the cell membrane. Functionally, cellular myosin that appears to play a role in cytokinesis, cell shape, and specialized functions such as secretion and capping. Involved with LARP6 in the stabilization of type I collagen mRNAs for CO1A1 and CO1A2. During cell spreading, plays an important role in cytoskeleton reorganization, focal contacts formation (in the central part but not the margins of spreading cells), and lamellipodial extension; this function is mechanically antagonized by MYH9. (Microbial infection) Acts as a receptor for herpes simplex virus 1/HHV-1 envelope glycoprotein B. The chain is Myosin-10 (MYH10) from Homo sapiens (Human).